We begin with the raw amino-acid sequence, 23 residues long: Cytochrome c3-1 (23 aa).

The interval 1-23 (AAPKAPADGLKMDKTKQXVVFNH) is disordered. Residue His23 coordinates heme.

Binds 4 heme groups per subunit.

It is found in the periplasm. In terms of biological role, participates in sulfate respiration coupled with phosphorylation by transferring electrons from the enzyme dehydrogenase to ferredoxin. The chain is Cytochrome c3-1 from Nitratidesulfovibrio vulgaris (Desulfovibrio vulgaris).